The chain runs to 500 residues: L-arabinose isomerase (500 aa).

Glu306, Glu333, His350, and His450 together coordinate Mn(2+).

The protein belongs to the arabinose isomerase family. In terms of assembly, homohexamer. Mn(2+) is required as a cofactor.

The enzyme catalyses beta-L-arabinopyranose = L-ribulose. It functions in the pathway carbohydrate degradation; L-arabinose degradation via L-ribulose; D-xylulose 5-phosphate from L-arabinose (bacterial route): step 1/3. In terms of biological role, catalyzes the conversion of L-arabinose to L-ribulose. This Escherichia coli O7:K1 (strain IAI39 / ExPEC) protein is L-arabinose isomerase.